The sequence spans 111 residues: UPF0145 protein BTH_I2656 (111 aa).

Belongs to the UPF0145 family.

This is UPF0145 protein BTH_I2656 from Burkholderia thailandensis (strain ATCC 700388 / DSM 13276 / CCUG 48851 / CIP 106301 / E264).